Here is a 345-residue protein sequence, read N- to C-terminus: Variable large protein 23 (345 aa).

The signal sequence occupies residues 1–18; it reads MRKRISAIIMTLFMVLVS. Cysteine 19 carries N-palmitoyl cysteine lipidation. Residue cysteine 19 is the site of S-diacylglycerol cysteine attachment.

Belongs to the variable large protein (Vlp) family. Delta subfamily.

It is found in the cell outer membrane. Its function is as follows. The Vlp and Vsp proteins are antigenically distinct proteins, only one vlp or vsp gene is transcriptionally active at any one time. Switching between these genes is a mechanism of host immune response evasion. The polypeptide is Variable large protein 23 (Borrelia hermsii).